A 404-amino-acid chain; its full sequence is Glycosyltransferase GlyB (404 aa).

Positions 1 to 267 (MNTKSIVFNA…ILLRKDIISR (267 aa)) are GT8 domain. Residues 9–14 (NADNDY) and 103–104 (DS) each bind UDP. Asp-103, Asp-105, and His-228 together coordinate Mn(2+). Position 228–233 (228–233 (HYTGVK)) interacts with UDP.

This sequence in the N-terminal section; belongs to the glycosyltransferase 8 family.

Functionally, may be involved in the polymorphic O-glycosylation of the serine-rich repeat protein PsrP. Has equal hydrolytic activity against both UDP-galactose and UDP-glucose; no glycosyltransferase activity has been seen with tested substrates. This Streptococcus pneumoniae serotype 4 (strain ATCC BAA-334 / TIGR4) protein is Glycosyltransferase GlyB.